A 419-amino-acid polypeptide reads, in one-letter code: 3-isopropylmalate dehydratase large subunit (419 aa).

[4Fe-4S] cluster is bound by residues cysteine 300, cysteine 360, and cysteine 363.

Belongs to the aconitase/IPM isomerase family. LeuC type 2 subfamily. As to quaternary structure, heterodimer of LeuC and LeuD. It depends on [4Fe-4S] cluster as a cofactor.

It carries out the reaction (2R,3S)-3-isopropylmalate = (2S)-2-isopropylmalate. It participates in amino-acid biosynthesis; L-leucine biosynthesis; L-leucine from 3-methyl-2-oxobutanoate: step 2/4. In terms of biological role, catalyzes the isomerization between 2-isopropylmalate and 3-isopropylmalate, via the formation of 2-isopropylmaleate. This is 3-isopropylmalate dehydratase large subunit from Clostridium botulinum (strain Eklund 17B / Type B).